Consider the following 314-residue polypeptide: tRNA pseudouridine synthase B (314 aa).

A substrate-binding site is contributed by His43. The active-site Nucleophile is the Asp48. Residues Tyr76, Tyr179, and Leu200 each coordinate substrate.

This sequence belongs to the pseudouridine synthase TruB family. Type 1 subfamily.

The catalysed reaction is uridine(55) in tRNA = pseudouridine(55) in tRNA. In terms of biological role, responsible for synthesis of pseudouridine from uracil-55 in the psi GC loop of transfer RNAs. The chain is tRNA pseudouridine synthase B from Salmonella arizonae (strain ATCC BAA-731 / CDC346-86 / RSK2980).